Consider the following 95-residue polypeptide: Small ribosomal subunit protein bS6 (95 aa).

This sequence belongs to the bacterial ribosomal protein bS6 family. Part of the 30S ribosomal subunit.

Functionally, binds together with bS18 to 16S ribosomal RNA. This is Small ribosomal subunit protein bS6 (rpsF) from Bacillus subtilis (strain 168).